We begin with the raw amino-acid sequence, 173 residues long: Mesencephalic astrocyte-derived neurotrophic factor homolog (173 aa).

The N-terminal stretch at 1–22 (MKTWHMVVVIGFLATLAQTSLA) is a signal peptide. Cystine bridges form between Cys-28/Cys-114, Cys-31/Cys-103, Cys-61/Cys-72, and Cys-148/Cys-151.

This sequence belongs to the ARMET family.

The protein localises to the secreted. Required during the maturation of the embryonic nervous system for maintenance of neuronal and cuticular connectivity. Essential for maintenance of dopaminergic neurons and dopamine levels. The polypeptide is Mesencephalic astrocyte-derived neurotrophic factor homolog (Drosophila sechellia (Fruit fly)).